An 836-amino-acid chain; its full sequence is Zinc fingers and homeoboxes protein 2 (836 aa).

The segment at L24–S58 is disordered. Residues A27–G77 are interaction with EFNB1. Positions V42–S58 are enriched in basic and acidic residues. C2H2-type zinc fingers lie at residues Y78–H101 and Y110–H133. The disordered stretch occupies residues S168 to N210. Residues Q192–N210 show a composition bias toward basic and acidic residues. A required for homodimerization region spans residues D195–S358. 4 DNA-binding regions (homeobox) span residues N263 to E324, T439 to I501, A530 to V591, and S628 to W690. The required for repressor activity stretch occupies residues N263 to K446. The tract at residues N263–G497 is required for interaction with NFYA. The segment at H317–K446 is required for nuclear localization. Positions G404 to S442 are disordered. K455 is covalently cross-linked (Glycyl lysine isopeptide (Lys-Gly) (interchain with G-Cter in SUMO2)). Composition is skewed to basic and acidic residues over residues S700–S709 and Y730–V746. The disordered stretch occupies residues S700–A836. Residues S824 and S826 each carry the phosphoserine modification.

The protein belongs to the ZHX family. As to quaternary structure, homodimer (via homeobox domain 1). Heterodimer with ZHX1 (via homeobox domain 1). Heterodimer with ZHX3 (via homeobox domain 1). Heterodimerization with ZHX1 is not necessary for repressor activity. Interacts (via homeobox domain) with NFYA (via N-terminus). Interacts with EFNB1 intracellular domain peptide; the interaction enhances ZHX2 transcriptional repression activity.

The protein resides in the nucleus. In terms of biological role, acts as a transcriptional repressor. Represses the promoter activity of the CDC25C gene stimulated by NFYA. May play a role in retinal development where it regulates the composition of bipolar cell populations, by promoting differentiation of bipolar OFF-type cells. In the brain, may promote maintenance and suppress differentiation of neural progenitor cells in the developing cortex. The sequence is that of Zinc fingers and homeoboxes protein 2 (Zhx2) from Rattus norvegicus (Rat).